Consider the following 111-residue polypeptide: MGLLLLLVGIGGGFGAMARFALTQATASISKQIPLGILLCNIIGSLIIGMMAAFLIETKLFNEDVSTYVRFLLVTGFLGGFTTFSSFSLDILNLLQRGEIFIAIGYIWLVS.

3 helical membrane passes run 2-22 (GLLL…RFAL), 36-56 (GILL…AFLI), and 71-91 (FLLV…SLDI). The Na(+) site is built by glycine 79 and threonine 82.

The protein belongs to the fluoride channel Fluc/FEX (TC 1.A.43) family.

The protein localises to the cell inner membrane. The catalysed reaction is fluoride(in) = fluoride(out). With respect to regulation, na(+) is not transported, but it plays an essential structural role and its presence is essential for fluoride channel function. Functionally, fluoride-specific ion channel. Important for reducing fluoride concentration in the cell, thus reducing its toxicity. This chain is Fluoride-specific ion channel FluC, found in Francisella tularensis subsp. holarctica (strain FTNF002-00 / FTA).